The sequence spans 2620 residues: Ankyrin repeat and KH domain-containing protein mask-1 (2620 aa).

ANK repeat units follow at residues 254–283, 288–318, 361–390, 402–431, 437–466, 470–502, 507–536, 538–566, 568–597, 600–629, 634–663, and 667–697; these read SKIT…DPNV, NCNT…KKPD, ERDS…KNPP, ERYS…PADL, IEPS…KIEE, KKNT…EVDV, TGDT…DLTA, KTSP…TIPQ, QLSR…DLNF, DERT…SVNF, NDAT…DPML, and DGVN…NMPM. Disordered regions lie at residues 699-726, 994-1032, and 1192-1229; these read KDPP…SGQD, HQEE…QPGA, and SLMA…AIDK. Polar residues predominate over residues 1012-1029; that stretch reads TSLTAPNPADTSDVTTKQ. Positions 1192-1206 are enriched in low complexity; sequence SLMAKSVQSQQQQGQ. Over residues 1210-1221 the composition is skewed to basic and acidic residues; the sequence is THSEGDGAERAK. ANK repeat units lie at residues 1234-1263, 1267-1296, 1301-1330, 1334-1363, 1369-1398, 1403-1432, 1436-1465, 1471-1500, 1504-1533, and 1537-1566; these read TLET…NIEH, KGFS…AIEA, TKDT…NKEH, SDYT…EINS, LGIS…DINA, NRNT…NVEH, TGLT…DTNA, TKDT…AVDV, KGCT…DPDM, and RKIS…QFPN. The stretch at 1596-1648 forms a coiled coil; that stretch reads AKKAQAESAELAAQKLLELIDEEKVQKEVKKQKQKDKKIKKKEEKKIKKQEAE. Disordered regions lie at residues 1621–1720 and 1759–1804; these read QKEV…AEEP and KEGK…EIDT. A compositionally biased stretch (basic and acidic residues) spans 1636-1647; it reads KKEEKKIKKQEA. A compositionally biased stretch (acidic residues) spans 1648–1661; sequence EPEPEPEPEPEPVP. 2 stretches are compositionally biased toward low complexity: residues 1665–1681 and 1769–1791; these read PVVI…IVVE and KSGY…TTSS. The KH domain maps to 1807–1873; the sequence is ESSWKLTIPA…EMVRYAMNII (67 aa). The span at 1899 to 1913 shows a compositional bias: polar residues; the sequence is ASSFSSEGTSKSAVD. Disordered regions lie at residues 1899 to 1962, 1976 to 2010, 2067 to 2143, 2267 to 2294, 2307 to 2343, 2372 to 2391, 2429 to 2448, and 2496 to 2620; these read ASSF…GNVW, LMET…QASE, SVQS…QTQN, NATS…VTTG, SFAP…QQQQ, QHQS…KFSM, QESS…NSYY, and QKKQ…SSNW. Residues 1917–1946 show a composition bias toward low complexity; it reads APSSIPKSLSSASIARQSASPIPQQSSQRS. Over residues 1982–1993 the composition is skewed to polar residues; it reads ISQSPKQAPQIP. 3 stretches are compositionally biased toward low complexity: residues 1994–2006, 2067–2078, and 2100–2118; these read STQQ…SRQD, SVQSVQHMQQQQ, and SQPI…SSFS. 2 stretches are compositionally biased toward polar residues: residues 2267–2286 and 2325–2339; these read NATS…VQQP and RSQS…STNI. The segment covering 2505-2528 has biased composition (polar residues); sequence SFMHNSQQPQPFGAPSNASANQSR. Residues 2535–2547 are compositionally biased toward pro residues; sequence RPQPPPFVAPQAP. A compositionally biased stretch (polar residues) spans 2552–2565; that stretch reads SLGNASSTTNPSRT. 2 stretches are compositionally biased toward low complexity: residues 2566–2588 and 2597–2620; these read SMQQ…QMPQ and QQQQ…SSNW.

It belongs to the mask family.

Its subcellular location is the cytoplasm. In Caenorhabditis elegans, this protein is Ankyrin repeat and KH domain-containing protein mask-1.